Reading from the N-terminus, the 381-residue chain is Pentatricopeptide repeat-containing protein 2, mitochondrial (381 aa).

The PPR repeat unit spans residues 157–191; that stretch reads DTTSFNITIDMLFNKQLYESGLEVVGEMKKQGVSL.

Belongs to the PTCD2 family.

Its subcellular location is the mitochondrion. Involved in mitochondrial RNA maturation and mitochondrial respiratory chain function. The protein is Pentatricopeptide repeat-containing protein 2, mitochondrial (ptcd2) of Danio rerio (Zebrafish).